The chain runs to 95 residues: MAPQTFALWLLLVGTLLGQGCCQHWSYGLSPGGKRELDGLSETLGNQIVGGFPHVETPCRVLGCAVESPFPKIYRMKGFLDAVTDRENGPRTYKK.

The first 22 residues, 1–22 (MAPQTFALWLLLVGTLLGQGCC), serve as a signal peptide directing secretion. Gln-23 carries the pyrrolidone carboxylic acid modification. Gly-32 is subject to Glycine amide.

The protein belongs to the GnRH family.

Its subcellular location is the secreted. In terms of biological role, stimulates the secretion of gonadotropins. The chain is Progonadoliberin-1 (gnrh1) from Morone saxatilis (Striped bass).